A 199-amino-acid chain; its full sequence is Photosystem I reaction center subunit XI (199 aa).

2 consecutive transmembrane segments (helical) span residues 108 to 128 (LTAG…LFVL) and 165 to 185 (FWLG…TLHL).

It belongs to the PsaL family.

The protein resides in the cellular thylakoid membrane. This is Photosystem I reaction center subunit XI from Prochlorococcus marinus (strain MIT 9301).